A 69-amino-acid polypeptide reads, in one-letter code: Conotoxin AbVIF (69 aa).

An N-terminal signal peptide occupies residues 1–17 (VLIIAVLFLTACQLTTA). Positions 18-40 (ETSSRGKQKHRALRSTDKNSRMS) are excised as a propeptide. The interval 20-41 (SSRGKQKHRALRSTDKNSRMSK) is disordered. Intrachain disulfides connect cysteine 43–cysteine 57, cysteine 50–cysteine 61, and cysteine 56–cysteine 68.

It belongs to the conotoxin O1 superfamily. Expressed by the venom duct.

The protein resides in the secreted. This is Conotoxin AbVIF from Conus abbreviatus (Abbreviated cone).